We begin with the raw amino-acid sequence, 347 residues long: Phenylalanine--tRNA ligase alpha subunit (347 aa).

Glu-261 provides a ligand contact to Mg(2+).

It belongs to the class-II aminoacyl-tRNA synthetase family. Phe-tRNA synthetase alpha subunit type 1 subfamily. In terms of assembly, tetramer of two alpha and two beta subunits. Requires Mg(2+) as cofactor.

The protein localises to the cytoplasm. The catalysed reaction is tRNA(Phe) + L-phenylalanine + ATP = L-phenylalanyl-tRNA(Phe) + AMP + diphosphate + H(+). In Streptococcus pyogenes serotype M18 (strain MGAS8232), this protein is Phenylalanine--tRNA ligase alpha subunit.